We begin with the raw amino-acid sequence, 209 residues long: Protein GrpE (209 aa).

The segment covering 1–13 (MSNDSSKAKQNQV) has biased composition (polar residues). The tract at residues 1–27 (MSNDSSKAKQNQVDEAVEGEIITDNEN) is disordered. The span at 15–27 (EAVEGEIITDNEN) shows a compositional bias: acidic residues.

It belongs to the GrpE family. In terms of assembly, homodimer.

The protein localises to the cytoplasm. Participates actively in the response to hyperosmotic and heat shock by preventing the aggregation of stress-denatured proteins, in association with DnaK and GrpE. It is the nucleotide exchange factor for DnaK and may function as a thermosensor. Unfolded proteins bind initially to DnaJ; upon interaction with the DnaJ-bound protein, DnaK hydrolyzes its bound ATP, resulting in the formation of a stable complex. GrpE releases ADP from DnaK; ATP binding to DnaK triggers the release of the substrate protein, thus completing the reaction cycle. Several rounds of ATP-dependent interactions between DnaJ, DnaK and GrpE are required for fully efficient folding. This chain is Protein GrpE, found in Shewanella sediminis (strain HAW-EB3).